The chain runs to 147 residues: Globin (147 aa).

A Globin domain is found at 1-147 (GLDGAQKTAL…LLTMLIKAHV (147 aa)). Heme b-binding residues include His66 and His98.

The protein belongs to the globin family. In terms of assembly, homodimer.

It localises to the cytoplasm. This Busycotypus canaliculatus (Channeled whelk) protein is Globin.